A 272-amino-acid chain; its full sequence is MICOS complex subunit MIC27 (272 aa).

A mitochondrion-targeting transit peptide spans 1 to 24; the sequence is MAAKVARLAAAASSLPFVCAVYAE. The Mitochondrial intermembrane portion of the chain corresponds to 28-107; that stretch reads SKSQLVKPKQ…YVYLKNPPPD (80 aa). The chain crosses the membrane as a helical span at residues 108–126; it reads FLPRVGIITISGLAGVVLA. Topologically, residues 127 to 134 are mitochondrial matrix; it reads RKDSRFKK. A helical membrane pass occupies residues 135–152; it reads IAYPLGLTTLGISVCYPA. The Mitochondrial intermembrane portion of the chain corresponds to 153 to 272; it reads QAVVIAKITG…EDVDMYSTRS (120 aa). Residues 187-272 are disordered; sequence SKLQQESKSV…EDVDMYSTRS (86 aa). Polar residues-rich tracts occupy residues 188–198 and 206–245; these read KLQQESKSVTQ and ISNV…TVKT.

This sequence belongs to the apolipoprotein O/MICOS complex subunit Mic27 family. Component of the mitochondrial contact site and cristae organizing system (MICOS) complex (also known as MINOS or MitOS complex).

Its subcellular location is the mitochondrion inner membrane. Its function is as follows. Component of the MICOS complex, a large protein complex of the mitochondrial inner membrane that plays crucial roles in the maintenance of crista junctions, inner membrane architecture, and formation of contact sites to the outer membrane. The chain is MICOS complex subunit MIC27 (APOOL) from Gallus gallus (Chicken).